A 222-amino-acid polypeptide reads, in one-letter code: Vesicle transport v-SNARE 12 (222 aa).

At Ser2 the chain carries N-acetylserine. Residues 2 to 199 (SDVFEGYERQ…MSRRMTRNKW (198 aa)) lie on the Cytoplasmic side of the membrane. Residues 68–95 (KAVCLSKLREYKSDLNQLKKEFKRVSSA) are a coiled coil. The chain crosses the membrane as a helical; Anchor for type IV membrane protein span at residues 200 to 220 (IITSVIVALVLAIILIISYKL). The Vesicular portion of the chain corresponds to 221–222 (SH).

This sequence belongs to the VTI1 family. In terms of assembly, forms SNARE complexes with the t-SNAREs SYP61 and either SYP41 or SYP42, and with a much lower affinity with SYP51 in the TGN. Also interacts with VPS45, a Sec1 protein, but not with SYP21 or SYP22. Binds to EPSIN2. Core constituent of the SNARE complex required for membrane fusion at the trans-Golgi network. Interacts with SCYL2B. In terms of tissue distribution, expressed in roots, stems, flowers and leaves.

It localises to the golgi apparatus. Its subcellular location is the trans-Golgi network membrane. The protein localises to the prevacuolar compartment membrane. It is found in the cell membrane. In terms of biological role, together with either SYP41 or SYP61, required for membrane fusion; the fusion of phospholipid vesicles containing SYP41 or SYP61 and VTI12 is triggered by YKT61 and YKT62. Functions as a v-SNARE responsible for the docking or fusion of transport vesicles within the trans-Golgi network (TGN) and mediates liposome fusion. Necessary to deliver proteins to the protein storage vacuole (PSV). May be also involved in retrograde traffic to the cis-Golgi. In Arabidopsis thaliana (Mouse-ear cress), this protein is Vesicle transport v-SNARE 12.